Here is a 2178-residue protein sequence, read N- to C-terminus: Toxin A (2178 aa).

The four-helical bundle stretch occupies residues 1–93; the sequence is MLITREQLMK…RELIKNSRTS (93 aa). The 377-residue stretch at 98 to 474 folds into the GT44 domain; it reads KNLSFIWIGG…KPEVNSTVFF (377 aa). A glucosyltransferase region region spans residues 98–474; the sequence is KNLSFIWIGG…KPEVNSTVFF (377 aa). The N-acetylglucosaminyltransferase region stretch occupies residues 98-474; it reads KNLSFIWIGG…KPEVNSTVFF (377 aa). UDP-N-acetyl-alpha-D-glucosamine is bound by residues 103-105, asparagine 141, 267-271, and 284-286; these read IWI, SDILR, and DLD. Aspartate 284, aspartate 286, and glutamate 520 together coordinate Mg(2+). A UDP-N-acetyl-alpha-D-glucosamine-binding site is contributed by 523–525; the sequence is SSW. The interval 549-806 is autoprocessing region; that stretch reads NYEDGLNFNK…RVEQLNKVAE (258 aa). Residues asparagine 557, lysine 607, and lysine 651 each coordinate 1D-myo-inositol hexakisphosphate. In terms of domain architecture, Peptidase C80 spans 574-787; that stretch reads VNSTKIYENY…QISNKYVVYW (214 aa). The active-site For protease activity is the histidine 657. The Nucleophile; for protease activity role is filled by cysteine 707. Residues 758–759 and lysine 782 each bind 1D-myo-inositol hexakisphosphate; that span reads KR. Residues 807-1485 form a translocation region region; that stretch reads FAKDINSIIQ…VYMEGKIFLN (679 aa). Cell wall-binding repeat units follow at residues 1799-1818, 1820-1839, 1870-1889, 1890-1909, 1910-1929, 1931-1950, 1951-1970, 2004-2023, 2024-2043, 2045-2060, 2064-2083, 2114-2133, 2134-2153, and 2155-2174; these read EYGW…INLI, KKGY…NTGV, YTGW…NSKA, VTGL…NGQM, QIKW…NTGE, IIGW…EGRL, LTGY…NING, YKGW…DSIA, VTGS…KTAV, TNGW…YVSN, VLGY…STGI, YTGW…YNSA, VTGW…KTGA, and TTGL…KGEQ.

It belongs to the clostridial glucosylating toxin (LCGT) family. Mn(2+) serves as cofactor. Requires Mg(2+) as cofactor. Undergoes autocatalytic cleavage to release the N-terminal part (N-acetylglucosaminyltransferase TcdA), which constitutes the active part of the toxin, in the host cytosol. 1D-myo-inositol hexakisphosphate-binding (InsP6) activates the peptidase C80 domain and promotes autoprocessing.

It localises to the secreted. Its subcellular location is the host endosome membrane. It is found in the host cytoplasm. The protein localises to the host cytosol. The protein resides in the host cell membrane. It carries out the reaction L-threonyl-[protein] + UDP-N-acetyl-alpha-D-glucosamine = 3-O-(N-acetyl-alpha-D-glucosaminyl)-L-threonyl-[protein] + UDP + H(+). With respect to regulation, protease activity is activated upon binding to 1D-myo-inositol hexakisphosphate (InsP6), which induces conformational reorganization. Functionally, precursor of a cytotoxin, which enters into host cells and mediates autoprocessing to release the active toxin (N-acetylglucosaminyltransferase TcdA) into the host cytosol. Once entered into host cells, acidification in the endosome promotes the membrane insertion of the translocation region and formation of a pore, leading to translocation of the GT44 and peptidase C80 domains across the endosomal membrane. This activates the peptidase C80 domain and autocatalytic processing, releasing the N-terminal part (N-acetylglucosaminyltransferase TcdA), which constitutes the active part of the toxin, in the cytosol. In terms of biological role, active form of the toxin, which is released into the host cytosol following autoprocessing and inactivates small GTPases. Acts by mediating monoglycosylation of small GTPases of the Rho family (Rac1, RhoA, RhoG and Cdc42) in host cells at the conserved threonine residue located in the switch I region ('Thr-37/35'), using UDP-N-acetyl-alpha-D-glucosamine as the sugar donor. Monoglycosylation of host small GTPases completely prevents the recognition of the downstream effector, blocking the GTPases in their inactive form, leading to actin cytoskeleton disruption and cell death. This chain is Toxin A (tcdA), found in Clostridium novyi.